A 267-amino-acid chain; its full sequence is NAD-capped RNA hydrolase NudC (267 aa).

Residue R70 coordinates substrate. C99 and C102 together coordinate Zn(2+). E112 is a substrate binding site. Zn(2+)-binding residues include C117 and C122. Position 127 (Y127) interacts with substrate. Residues 128–257 enclose the Nudix hydrolase domain; it reads PVICPSIIVA…TIARALIEAT (130 aa). A divalent metal cation is bound by residues A166, E182, and E186. Positions 167–188 match the Nudix box motif; it reads GFVEVGESFEQTIHREVFEETG. 200–207 provides a ligand contact to substrate; that stretch reads QPWAFPNS. E227 is an a divalent metal cation binding site. A250 contributes to the substrate binding site.

The protein belongs to the Nudix hydrolase family. NudC subfamily. Homodimer. Mg(2+) is required as a cofactor. It depends on Mn(2+) as a cofactor. Requires Zn(2+) as cofactor.

It catalyses the reaction a 5'-end NAD(+)-phospho-ribonucleoside in mRNA + H2O = a 5'-end phospho-adenosine-phospho-ribonucleoside in mRNA + beta-nicotinamide D-ribonucleotide + 2 H(+). It carries out the reaction NAD(+) + H2O = beta-nicotinamide D-ribonucleotide + AMP + 2 H(+). The catalysed reaction is NADH + H2O = reduced beta-nicotinamide D-ribonucleotide + AMP + 2 H(+). Functionally, mRNA decapping enzyme that specifically removes the nicotinamide adenine dinucleotide (NAD) cap from a subset of mRNAs by hydrolyzing the diphosphate linkage to produce nicotinamide mononucleotide (NMN) and 5' monophosphate mRNA. The NAD-cap is present at the 5'-end of some mRNAs and stabilizes RNA against 5'-processing. Has preference for mRNAs with a 5'-end purine. Catalyzes the hydrolysis of a broad range of dinucleotide pyrophosphates. In Mannheimia succiniciproducens (strain KCTC 0769BP / MBEL55E), this protein is NAD-capped RNA hydrolase NudC.